Here is a 273-residue protein sequence, read N- to C-terminus: Shikimate dehydrogenase (NADP(+)) (273 aa).

Residues 18 to 20 and threonine 65 each bind shikimate; that span reads SKS. The active-site Proton acceptor is the lysine 69. An NADP(+)-binding site is contributed by glutamate 81. Residues asparagine 90 and aspartate 105 each coordinate shikimate. NADP(+) contacts are provided by residues 130-134, 154-159, and methionine 217; these read GAGGA and NRTHSK. Tyrosine 219 is a binding site for shikimate. Glycine 240 contacts NADP(+).

The protein belongs to the shikimate dehydrogenase family. In terms of assembly, homodimer.

It catalyses the reaction shikimate + NADP(+) = 3-dehydroshikimate + NADPH + H(+). Its pathway is metabolic intermediate biosynthesis; chorismate biosynthesis; chorismate from D-erythrose 4-phosphate and phosphoenolpyruvate: step 4/7. Its function is as follows. Involved in the biosynthesis of the chorismate, which leads to the biosynthesis of aromatic amino acids. Catalyzes the reversible NADPH linked reduction of 3-dehydroshikimate (DHSA) to yield shikimate (SA). The polypeptide is Shikimate dehydrogenase (NADP(+)) (Janthinobacterium sp. (strain Marseille) (Minibacterium massiliensis)).